The following is a 147-amino-acid chain: Lysozyme C-3 (147 aa).

An N-terminal signal peptide occupies residues 1–18; the sequence is MKALVILGLLFLSVAVQG. The 129-residue stretch at 19–147 folds into the C-type lysozyme domain; the sequence is KVFERCELAR…VSSYVEGCKL (129 aa). 4 disulfides stabilise this stretch: C24/C145, C48/C133, C83/C99, and C95/C113. Residues E53 and D71 contribute to the active site.

Belongs to the glycosyl hydrolase 22 family. As to quaternary structure, monomer. In terms of tissue distribution, expressed in stomach.

It localises to the secreted. The catalysed reaction is Hydrolysis of (1-&gt;4)-beta-linkages between N-acetylmuramic acid and N-acetyl-D-glucosamine residues in a peptidoglycan and between N-acetyl-D-glucosamine residues in chitodextrins.. Functionally, lysozymes have primarily a bacteriolytic function; those in tissues and body fluids are associated with the monocyte-macrophage system and enhance the activity of immunoagents. This Ovis aries (Sheep) protein is Lysozyme C-3.